The primary structure comprises 123 residues: Aspartate 1-decarboxylase (123 aa).

The active-site Schiff-base intermediate with substrate; via pyruvic acid is S25. S25 bears the Pyruvic acid (Ser) mark. T57 contacts substrate. Y58 functions as the Proton donor in the catalytic mechanism. 73–75 provides a ligand contact to substrate; it reads GAA.

The protein belongs to the PanD family. Heterooctamer of four alpha and four beta subunits. The cofactor is pyruvate. Post-translationally, is synthesized initially as an inactive proenzyme, which is activated by self-cleavage at a specific serine bond to produce a beta-subunit with a hydroxyl group at its C-terminus and an alpha-subunit with a pyruvoyl group at its N-terminus.

It localises to the cytoplasm. It carries out the reaction L-aspartate + H(+) = beta-alanine + CO2. It functions in the pathway cofactor biosynthesis; (R)-pantothenate biosynthesis; beta-alanine from L-aspartate: step 1/1. Functionally, catalyzes the pyruvoyl-dependent decarboxylation of aspartate to produce beta-alanine. This chain is Aspartate 1-decarboxylase, found in Clostridium novyi (strain NT).